Reading from the N-terminus, the 333-residue chain is MTSTPAEAKITVMAVHAHPDDETLWTGLALAKARRLGHDVAVVTCTLGEEGEVIGEKYQALVDAQQYEQGTGMLGGYRIAELQRALGALGVQHGPNFLGGCGTWRDSGMEGSESIRHPRAFAREVEPAQDLLDAQVEQLIQQIQSIRPEVILTYAADGGYGHPDHKQAHRIVHEAVQRLSGASAEGAGADVFVPSQVLWCVTEDEKFAKGMQGLEDDPTAVPEGWTLPAAGEIATVPSAEVDLVIHGSAEDVAAKQAAMRAHATQIWVADGTASDVNAQVRESNPPAPSATTLFCLSNLITQPLLDSESYRLGWTAPGVPEDFFARALAEQMV.

Zn(2+) is bound by residues histidine 18, aspartate 21, and histidine 165.

Belongs to the MshB deacetylase family. Zn(2+) serves as cofactor.

The enzyme catalyses 1D-myo-inositol 2-acetamido-2-deoxy-alpha-D-glucopyranoside + H2O = 1D-myo-inositol 2-amino-2-deoxy-alpha-D-glucopyranoside + acetate. Its function is as follows. Catalyzes the deacetylation of 1D-myo-inositol 2-acetamido-2-deoxy-alpha-D-glucopyranoside (GlcNAc-Ins) in the mycothiol biosynthesis pathway. The sequence is that of 1D-myo-inositol 2-acetamido-2-deoxy-alpha-D-glucopyranoside deacetylase from Corynebacterium jeikeium (strain K411).